A 437-amino-acid polypeptide reads, in one-letter code: Sodium/bile acid cotransporter 4 (437 aa).

The Extracellular portion of the chain corresponds to 1 to 103 (MDGNDNVTLL…LPFWDTPLNH (103 aa)). N-linked (GlcNAc...) asparagine glycosylation is found at Asn6, Asn18, and Asn24. Residues 37–82 (APASSAGPGPGLSLGPGPSFGFSPGPTPTPEPTTSGLAGGAASHGP) form a disordered region. A compositionally biased stretch (low complexity) spans 51-60 (GPGPSFGFSP). A helical transmembrane segment spans residues 104–124 (GLNVFVGAALCITMLGLGCTV). Over 125–140 (DVNHFGAHVRRPVGAL) the chain is Cytoplasmic. A helical membrane pass occupies residues 141-161 (LAALCQFGLLPLLAFLLALAF). Residues 162-197 (KLDEVAAVAVLLCGCCPGGNLSNLMSLLVDGDMNLS) lie on the Extracellular side of the membrane. 2 N-linked (GlcNAc...) asparagine glycosylation sites follow: Asn181 and Asn195. A helical transmembrane segment spans residues 198–218 (IIMTISSTLLALVLMPLCLWI). Residues 219–233 (YSWAWINTPIVQLLP) are Cytoplasmic-facing. A helical transmembrane segment spans residues 234 to 254 (LGTVTLTLCSTLIPIGLGVFI). Residues 255 to 267 (RYKYSRVADYIVK) are Extracellular-facing. Residues 268-288 (VSLWSLLVTLVVLFIMTGTML) form a helical membrane-spanning segment. Over 289–291 (GPE) the chain is Cytoplasmic. A helical membrane pass occupies residues 292 to 312 (LLASIPAAVYVIAIFMPLAGY). At 313–360 (ASGYGLATLFHLPPNCKRTVCLETGSQNVQLCTAILKLAFPPQFIGSM) the chain is on the extracellular side. A helical membrane pass occupies residues 361 to 381 (YMFPLLYALFQSAEAGIFVLI). Residues 382 to 437 (YKMYGSEMLHKRDPLDEDEDTDISYKKLKEEEMADTSYGTVKAENIIMMETAQTSL) lie on the Cytoplasmic side of the membrane.

The protein belongs to the bile acid:sodium symporter (BASS) (TC 2.A.28) family. In terms of processing, activated following N-terminal proteolytic cleavage by thrombin and/or proteases. In terms of tissue distribution, highly expressed in brain and small intestine, and moderately expressed in colon, heart, prostate, and testis. Very low levels were detected in kidney, liver, ovary, placenta, spleen, and thymus.

It is found in the cell membrane. In terms of biological role, transporter for bile acids. The polypeptide is Sodium/bile acid cotransporter 4 (SLC10A4) (Homo sapiens (Human)).